We begin with the raw amino-acid sequence, 517 residues long: GMP synthase [glutamine-hydrolyzing] (517 aa).

A Glutamine amidotransferase type-1 domain is found at 9–199 (RILILDFGSQ…VLGVCGCERL (191 aa)). Catalysis depends on Cys86, which acts as the Nucleophile. Catalysis depends on residues His173 and Glu175. In terms of domain architecture, GMPS ATP-PPase spans 200 to 392 (WTSESIIEDA…LGLPYNMLYR (193 aa)). 227-233 (SGGVDSS) is a binding site for ATP.

Homodimer.

The catalysed reaction is XMP + L-glutamine + ATP + H2O = GMP + L-glutamate + AMP + diphosphate + 2 H(+). It participates in purine metabolism; GMP biosynthesis; GMP from XMP (L-Gln route): step 1/1. Its function is as follows. Catalyzes the synthesis of GMP from XMP. In Vibrio parahaemolyticus serotype O3:K6 (strain RIMD 2210633), this protein is GMP synthase [glutamine-hydrolyzing].